The primary structure comprises 234 residues: Leucyl/phenylalanyl-tRNA--protein transferase (234 aa).

This sequence belongs to the L/F-transferase family.

The protein resides in the cytoplasm. It carries out the reaction N-terminal L-lysyl-[protein] + L-leucyl-tRNA(Leu) = N-terminal L-leucyl-L-lysyl-[protein] + tRNA(Leu) + H(+). The catalysed reaction is N-terminal L-arginyl-[protein] + L-leucyl-tRNA(Leu) = N-terminal L-leucyl-L-arginyl-[protein] + tRNA(Leu) + H(+). It catalyses the reaction L-phenylalanyl-tRNA(Phe) + an N-terminal L-alpha-aminoacyl-[protein] = an N-terminal L-phenylalanyl-L-alpha-aminoacyl-[protein] + tRNA(Phe). Functions in the N-end rule pathway of protein degradation where it conjugates Leu, Phe and, less efficiently, Met from aminoacyl-tRNAs to the N-termini of proteins containing an N-terminal arginine or lysine. The chain is Leucyl/phenylalanyl-tRNA--protein transferase from Klebsiella pneumoniae (strain 342).